Reading from the N-terminus, the 317-residue chain is HTH-type transcriptional regulator CfxR (317 aa).

The region spanning leucine 8–threonine 65 is the HTH lysR-type domain. Positions phenylalanine 25–lysine 44 form a DNA-binding region, H-T-H motif.

The protein belongs to the LysR transcriptional regulatory family.

Its function is as follows. Trans-acting transcriptional regulator of RuBisCO genes (cfxLS) expression. The polypeptide is HTH-type transcriptional regulator CfxR (cfxR) (Cupriavidus necator (strain ATCC 17699 / DSM 428 / KCTC 22496 / NCIMB 10442 / H16 / Stanier 337) (Ralstonia eutropha)).